The chain runs to 546 residues: Chaperonin GroEL (546 aa).

ATP contacts are provided by residues 30 to 33 (TLGP), Lys-51, 87 to 91 (DGTTT), Gly-415, 479 to 481 (NAA), and Asp-495. The disordered stretch occupies residues 526-546 (KEDAPMPGGMPGGMGGMGMDM). The span at 534-546 (GMPGGMGGMGMDM) shows a compositional bias: gly residues.

It belongs to the chaperonin (HSP60) family. In terms of assembly, forms a cylinder of 14 subunits composed of two heptameric rings stacked back-to-back. Interacts with the co-chaperonin GroES.

Its subcellular location is the cytoplasm. It catalyses the reaction ATP + H2O + a folded polypeptide = ADP + phosphate + an unfolded polypeptide.. Together with its co-chaperonin GroES, plays an essential role in assisting protein folding. The GroEL-GroES system forms a nano-cage that allows encapsulation of the non-native substrate proteins and provides a physical environment optimized to promote and accelerate protein folding. The protein is Chaperonin GroEL of Burkholderia thailandensis.